Reading from the N-terminus, the 289-residue chain is Glycine--tRNA ligase alpha subunit (289 aa).

It belongs to the class-II aminoacyl-tRNA synthetase family. In terms of assembly, tetramer of two alpha and two beta subunits.

It is found in the cytoplasm. The enzyme catalyses tRNA(Gly) + glycine + ATP = glycyl-tRNA(Gly) + AMP + diphosphate. This is Glycine--tRNA ligase alpha subunit from Nitratidesulfovibrio vulgaris (strain ATCC 29579 / DSM 644 / CCUG 34227 / NCIMB 8303 / VKM B-1760 / Hildenborough) (Desulfovibrio vulgaris).